A 709-amino-acid chain; its full sequence is Cell adhesion molecule CEACAM3 (709 aa).

The first 34 residues, 1 to 34, serve as a signal peptide directing secretion; sequence MELSSVLPCKRCTPWRGLLLTASLLTCWLLPTTA. 5 consecutive Ig-like V-type domains span residues 35–142, 155–262, 275–382, 393–500, and 509–616; these read QVSI…HVYF, QLSI…QVDT, QLTV…QVNT, LLTI…SVHT, and QLVI…HIYK. Residues asparagine 73, asparagine 86, asparagine 103, asparagine 110, asparagine 133, asparagine 207, asparagine 224, asparagine 231, asparagine 327, asparagine 344, asparagine 351, asparagine 381, asparagine 462, asparagine 561, asparagine 578, and asparagine 585 are each glycosylated (N-linked (GlcNAc...) asparagine). In terms of domain architecture, Ig-like C2-type spans 631–695; sequence RVKSSVVLTC…YRCEVSNPVS (65 aa).

Belongs to the immunoglobulin superfamily. CEA family. Expression detected only in placenta.

Its function is as follows. Possibly involved in cell adhesion. In Rattus norvegicus (Rat), this protein is Cell adhesion molecule CEACAM3.